A 544-amino-acid chain; its full sequence is Membrane protein insertase YidC (544 aa).

A helical membrane pass occupies residues 6-26; the sequence is NILLIGLLFVSFLLWQQWQAD. The tract at residues 34 to 58 is disordered; it reads AAQTQSSIPASTVADSHSSDVPDAD. Residues 39–49 are compositionally biased toward polar residues; the sequence is SSIPASTVADS. The next 4 helical transmembrane spans lie at 345–365, 423–443, 460–480, and 503–523; these read LLMF…LITL, GGCL…WVLL, LSVQ…MFVM, and VIFT…WLVG.

Belongs to the OXA1/ALB3/YidC family. Type 1 subfamily. Interacts with the Sec translocase complex via SecD. Specifically interacts with transmembrane segments of nascent integral membrane proteins during membrane integration.

The protein localises to the cell inner membrane. Its function is as follows. Required for the insertion and/or proper folding and/or complex formation of integral membrane proteins into the membrane. Involved in integration of membrane proteins that insert both dependently and independently of the Sec translocase complex, as well as at least some lipoproteins. Aids folding of multispanning membrane proteins. The chain is Membrane protein insertase YidC from Shewanella halifaxensis (strain HAW-EB4).